The primary structure comprises 565 residues: Translation machinery-associated protein 64 (565 aa).

Residues 89-170 enclose the PUA domain; sequence LPIVLTHGFV…VAVKIIHHFN (82 aa). One can recognise an SWIB/MDM2 domain in the interval 362–447; sequence TLYKPFNLAK…GEILHPLLTN (86 aa). Residues 475–547 enclose the SUI1 domain; that stretch reads IKIITEMKIG…SIIDHLNKLG (73 aa).

The protein belongs to the eIF2D family. As to quaternary structure, interacts with the 40S ribosomal subunit.

This is Translation machinery-associated protein 64 (TMA64) from Saccharomyces cerevisiae (strain ATCC 204508 / S288c) (Baker's yeast).